The primary structure comprises 361 residues: Tetraacyldisaccharide 4'-kinase (361 aa).

Thr49 to Thr56 contributes to the ATP binding site.

Belongs to the LpxK family.

The catalysed reaction is a lipid A disaccharide + ATP = a lipid IVA + ADP + H(+). The protein operates within glycolipid biosynthesis; lipid IV(A) biosynthesis; lipid IV(A) from (3R)-3-hydroxytetradecanoyl-[acyl-carrier-protein] and UDP-N-acetyl-alpha-D-glucosamine: step 6/6. Its function is as follows. Transfers the gamma-phosphate of ATP to the 4'-position of a tetraacyldisaccharide 1-phosphate intermediate (termed DS-1-P) to form tetraacyldisaccharide 1,4'-bis-phosphate (lipid IVA). The protein is Tetraacyldisaccharide 4'-kinase of Chlorobaculum parvum (strain DSM 263 / NCIMB 8327) (Chlorobium vibrioforme subsp. thiosulfatophilum).